The primary structure comprises 396 residues: Elongation factor Tu (396 aa).

Residues 10–206 (KPHVNIGTIG…AVDESVPDPV (197 aa)) form the tr-type G domain. Residues 19–26 (GHVDHGKT) form a G1 region. GTP is bound at residue 19–26 (GHVDHGKT). Thr26 contacts Mg(2+). Residues 62–66 (GITIN) are G2. Residues 83–86 (DAPG) form a G3 region. GTP-binding positions include 83 to 87 (DAPGH) and 138 to 141 (NKSD). The segment at 138 to 141 (NKSD) is G4. The interval 176–178 (SGL) is G5.

It belongs to the TRAFAC class translation factor GTPase superfamily. Classic translation factor GTPase family. EF-Tu/EF-1A subfamily. Monomer.

It localises to the cytoplasm. It carries out the reaction GTP + H2O = GDP + phosphate + H(+). In terms of biological role, GTP hydrolase that promotes the GTP-dependent binding of aminoacyl-tRNA to the A-site of ribosomes during protein biosynthesis. The sequence is that of Elongation factor Tu from Pseudarthrobacter chlorophenolicus (strain ATCC 700700 / DSM 12829 / CIP 107037 / JCM 12360 / KCTC 9906 / NCIMB 13794 / A6) (Arthrobacter chlorophenolicus).